A 106-amino-acid polypeptide reads, in one-letter code: Large ribosomal subunit protein P2 (106 aa).

The segment at glycine 79–aspartate 106 is disordered. Residues proline 91 to methionine 100 show a composition bias toward acidic residues.

It belongs to the eukaryotic ribosomal protein P1/P2 family. In terms of assembly, P1 and P2 exist as dimers at the large ribosomal subunit. Post-translationally, phosphorylated.

Functionally, plays an important role in the elongation step of protein synthesis. This Leishmania infantum protein is Large ribosomal subunit protein P2 (LIP).